Reading from the N-terminus, the 288-residue chain is ATP phosphoribosyltransferase (288 aa).

Belongs to the ATP phosphoribosyltransferase family. Long subfamily. Requires Mg(2+) as cofactor.

Its subcellular location is the cytoplasm. The enzyme catalyses 1-(5-phospho-beta-D-ribosyl)-ATP + diphosphate = 5-phospho-alpha-D-ribose 1-diphosphate + ATP. The protein operates within amino-acid biosynthesis; L-histidine biosynthesis; L-histidine from 5-phospho-alpha-D-ribose 1-diphosphate: step 1/9. With respect to regulation, feedback inhibited by histidine. Its function is as follows. Catalyzes the condensation of ATP and 5-phosphoribose 1-diphosphate to form N'-(5'-phosphoribosyl)-ATP (PR-ATP). Has a crucial role in the pathway because the rate of histidine biosynthesis seems to be controlled primarily by regulation of HisG enzymatic activity. This chain is ATP phosphoribosyltransferase, found in Methanococcus maripaludis (strain C5 / ATCC BAA-1333).